Here is a 181-residue protein sequence, read N- to C-terminus: Inner membrane-spanning protein YciB (181 aa).

A run of 5 helical transmembrane segments spans residues 8 to 28 (FPIICFFVAYKFWGIYIATAA), 53 to 73 (ITLIFILLLGSFTLVFHNAIF), 76 to 96 (WKPTIVYWIFAIVLFGSHFFG), 121 to 141 (LSWALFFLILGVLNLFVVYNF), and 149 to 169 (FKLFGTLALMLVFILGQAFYI).

The protein belongs to the YciB family.

The protein resides in the cell inner membrane. Functionally, plays a role in cell envelope biogenesis, maintenance of cell envelope integrity and membrane homeostasis. The sequence is that of Inner membrane-spanning protein YciB from Coxiella burnetii (strain CbuK_Q154) (Coxiella burnetii (strain Q154)).